A 439-amino-acid polypeptide reads, in one-letter code: Protein ABHD8 (439 aa).

2 disordered regions span residues 49-70 (AGPAPAAAPPPPSSASSDAAQG) and 124-156 (PAGSDGRLAPGSAGSGSGSGSGGRRRRARRPKR). Positions 136 to 145 (AGSGSGSGSG) are enriched in gly residues. Over residues 146–156 (GRRRRARRPKR) the composition is skewed to basic residues. Positions 177 to 279 (VLFFIHGVGG…HKVIMINGGG (103 aa)) constitute an AB hydrolase-1 domain. Residues Ser252, Asp370, and His398 each act as charge relay system in the active site.

This sequence belongs to the AB hydrolase superfamily. Interacts with NLRP3 (via NACHT and LLR domains); this interaction is enhanced in the presence of NLRP3 inflammasome inducers, such as ATP, nigericin, silica, or alum. Interacts with ZDHHC12. In terms of assembly, (Microbial infection) Interacts with SARS-CoV-2 nucleoprotein N; this interaction disrupts the NLRP3-ABHD8 association, enhancing NLRP3 stability, ultimately leading to increased inflammasome activation.

It localises to the cytoplasm. Functionally, negatively regulates NLRP3-driven inflammation. Promotes NLRP3 degradation through the chaperone-mediated autophagy (CMA) pathway, hence attenuating inflammasome activation and IL1B secretion. Acts by recruiting palmitoyltransferase ZDHHC12 to NLRP3, facilitating NLRP3 palmitoylation and subsequent degradation. The protein is Protein ABHD8 of Homo sapiens (Human).